Here is a 330-residue protein sequence, read N- to C-terminus: uncharacterized protein (330 aa).

This is an uncharacterized protein from Archaeoglobus fulgidus (strain ATCC 49558 / DSM 4304 / JCM 9628 / NBRC 100126 / VC-16).